A 348-amino-acid chain; its full sequence is D-alanine--D-alanine ligase (348 aa).

Positions 132–334 constitute an ATP-grasp domain; it reads KRVLESADIP…YAELIEELVR (203 aa). 162 to 217 lines the ATP pocket; the sequence is EAVLSYPVFVKPANMGSSVGISKAESEEELRAAILLALTYDSRILIEQGVLAREIE. 3 residues coordinate Mg(2+): Asp-288, Glu-301, and Asn-303.

Belongs to the D-alanine--D-alanine ligase family. The cofactor is Mg(2+). It depends on Mn(2+) as a cofactor.

Its subcellular location is the cytoplasm. It catalyses the reaction 2 D-alanine + ATP = D-alanyl-D-alanine + ADP + phosphate + H(+). It participates in cell wall biogenesis; peptidoglycan biosynthesis. In terms of biological role, cell wall formation. The protein is D-alanine--D-alanine ligase of Streptococcus equi subsp. zooepidemicus (strain MGCS10565).